The following is a 338-amino-acid chain: Ketol-acid reductoisomerase (NADP(+)) (338 aa).

In terms of domain architecture, KARI N-terminal Rossmann spans 1 to 181 (MKVFYDNDAD…GGTRAGVIET (181 aa)). NADP(+) is bound by residues 24 to 27 (YGSQ), Arg-47, Ser-50, Ser-52, and 82 to 85 (DEGQ). His-107 is an active-site residue. Gly-133 serves as a coordination point for NADP(+). A KARI C-terminal knotted domain is found at 182-327 (SFREETETDL…SKLRSMMTWI (146 aa)). Residues Asp-190, Glu-194, Glu-226, and Glu-230 each coordinate Mg(2+). Position 251 (Ser-251) interacts with substrate.

It belongs to the ketol-acid reductoisomerase family. Mg(2+) serves as cofactor.

The enzyme catalyses (2R)-2,3-dihydroxy-3-methylbutanoate + NADP(+) = (2S)-2-acetolactate + NADPH + H(+). The catalysed reaction is (2R,3R)-2,3-dihydroxy-3-methylpentanoate + NADP(+) = (S)-2-ethyl-2-hydroxy-3-oxobutanoate + NADPH + H(+). The protein operates within amino-acid biosynthesis; L-isoleucine biosynthesis; L-isoleucine from 2-oxobutanoate: step 2/4. It participates in amino-acid biosynthesis; L-valine biosynthesis; L-valine from pyruvate: step 2/4. Involved in the biosynthesis of branched-chain amino acids (BCAA). Catalyzes an alkyl-migration followed by a ketol-acid reduction of (S)-2-acetolactate (S2AL) to yield (R)-2,3-dihydroxy-isovalerate. In the isomerase reaction, S2AL is rearranged via a Mg-dependent methyl migration to produce 3-hydroxy-3-methyl-2-ketobutyrate (HMKB). In the reductase reaction, this 2-ketoacid undergoes a metal-dependent reduction by NADPH to yield (R)-2,3-dihydroxy-isovalerate. The polypeptide is Ketol-acid reductoisomerase (NADP(+)) (Acidithiobacillus ferrooxidans (strain ATCC 23270 / DSM 14882 / CIP 104768 / NCIMB 8455) (Ferrobacillus ferrooxidans (strain ATCC 23270))).